The sequence spans 600 residues: Dihydroxy-acid dehydratase (600 aa).

Asp-82 provides a ligand contact to Mg(2+). Cys-123 contributes to the [2Fe-2S] cluster binding site. Positions 124 and 125 each coordinate Mg(2+). Lys-125 carries the N6-carboxylysine modification. Cys-192 lines the [2Fe-2S] cluster pocket. A Mg(2+)-binding site is contributed by Glu-489. Ser-515 (proton acceptor) is an active-site residue.

Belongs to the IlvD/Edd family. As to quaternary structure, homodimer. [2Fe-2S] cluster is required as a cofactor. Requires Mg(2+) as cofactor.

It carries out the reaction (2R)-2,3-dihydroxy-3-methylbutanoate = 3-methyl-2-oxobutanoate + H2O. The enzyme catalyses (2R,3R)-2,3-dihydroxy-3-methylpentanoate = (S)-3-methyl-2-oxopentanoate + H2O. The protein operates within amino-acid biosynthesis; L-isoleucine biosynthesis; L-isoleucine from 2-oxobutanoate: step 3/4. It participates in amino-acid biosynthesis; L-valine biosynthesis; L-valine from pyruvate: step 3/4. Functions in the biosynthesis of branched-chain amino acids. Catalyzes the dehydration of (2R,3R)-2,3-dihydroxy-3-methylpentanoate (2,3-dihydroxy-3-methylvalerate) into 2-oxo-3-methylpentanoate (2-oxo-3-methylvalerate) and of (2R)-2,3-dihydroxy-3-methylbutanoate (2,3-dihydroxyisovalerate) into 2-oxo-3-methylbutanoate (2-oxoisovalerate), the penultimate precursor to L-isoleucine and L-valine, respectively. The polypeptide is Dihydroxy-acid dehydratase (Bacteroides fragilis (strain YCH46)).